The primary structure comprises 344 residues: Polycomb group RING finger protein 2 (344 aa).

Residues 18 to 57 (CALCGGYFIDATTIVECLHSFCKTCIVRYLETNKYCPMCD) form an RING-type zinc finger. Glycyl lysine isopeptide (Lys-Gly) (interchain with G-Cter in SUMO2) cross-links involve residues K51 and K88. The Nuclear localization signal motif lies at 81–95 (KLVPGLFKDEMKRRR). Over residues 240–253 (TVPTPSEGTNTSGA) the composition is skewed to polar residues. The interval 240–344 (TVPTPSEGTN…VNGAPVPPLT (105 aa)) is disordered. Low complexity predominate over residues 263 to 313 (APSPATLPATSSSLPSPATPSHGSPSSHGPPATHPTSPTPPSTASGATTAA). Over residues 314–328 (NGGSLNCLQTPSSTS) the composition is skewed to polar residues. T344 is subject to Phosphothreonine.

As to quaternary structure, exists as both a monomer and homodimer. Component of a PRC1-like complex. Interacts with CBX8, RING1 and RNF2. Interacts with CBX7. Interacts with PHC2. Phosphorylated. Homodimer formation is regulated by phosphorylation with only unphosphorylated proteins forming homodimers. In terms of tissue distribution, detected in all tissues examined with high expression found in placenta lung and kidney and low expression, in liver, pancreas and skeletal muscle.

It is found in the nucleus. Its function is as follows. Transcriptional repressor. Binds specifically to the DNA sequence 5'-GACTNGACT-3'. Has tumor suppressor activity. May play a role in control of cell proliferation and/or neural cell development. Regulates proliferation of early T progenitor cells by maintaining expression of HES1. Also plays a role in antero-posterior specification of the axial skeleton and negative regulation of the self-renewal activity of hematopoietic stem cells. Component of a Polycomb group (PcG) multiprotein PRC1-like complex, a complex class required to maintain the transcriptionally repressive state of many genes, including Hox genes, throughout development. PcG PRC1 complex acts via chromatin remodeling and modification of histones; it mediates monoubiquitination of histone H2A 'Lys-119', rendering chromatin heritably changed in its expressibility. Within the PRC1-like complex, regulates RNF2 ubiquitin ligase activity. The polypeptide is Polycomb group RING finger protein 2 (PCGF2) (Homo sapiens (Human)).